Consider the following 557-residue polypeptide: T-complex protein 1 subunit eta (557 aa).

Residue A2 is modified to N-acetylalanine. The tract at residues 529–557 (PKSESAQGDAAGAMGRGRGGGRGRGMRRR) is disordered. Over residues 547–557 (GGGRGRGMRRR) the composition is skewed to basic residues.

The protein belongs to the TCP-1 chaperonin family. Heterooligomeric complex of about 850 to 900 kDa that forms two stacked rings, 12 to 16 nm in diameter. Interacts with KNAT1.

The protein localises to the cytoplasm. Functionally, molecular chaperone; assists the folding of proteins upon ATP hydrolysis. Known to play a role, in vitro, in the folding of actin and tubulin. The sequence is that of T-complex protein 1 subunit eta from Arabidopsis thaliana (Mouse-ear cress).